Reading from the N-terminus, the 173-residue chain is Cytochrome c homolog (173 aa).

Residues 1–8 (MSGKELNK) are Cytoplasmic-facing. The chain crosses the membrane as a helical; Signal-anchor span at residues 9-29 (IVAAILFASLIAMMVGFIANI). Residues 30-173 (LYKPVLEPKH…LFLKTYVHDK (144 aa)) lie on the Periplasmic side of the membrane. Residues Cys82, Cys85, His86, and Met148 each contribute to the heme c site.

Belongs to the cytochrome c family. Binds 1 heme c group covalently per subunit.

The protein resides in the cell membrane. May be involved in electron transfer from bc1 complex to aa3. The polypeptide is Cytochrome c homolog (cycM) (Rickettsia bellii (strain RML369-C)).